The chain runs to 378 residues: SPbeta prophage-derived uncharacterized protein YorJ (378 aa).

The sequence is that of SPbeta prophage-derived uncharacterized protein YorJ (yorJ) from Bacillus subtilis (strain 168).